Reading from the N-terminus, the 845-residue chain is BLOC-2 complex member HPS5 homolog (845 aa).

The tract at residues 239-268 is disordered; it reads PTEEDLEDAKSMEGSDDNDNDQRSSPSGVK.

This sequence belongs to the HPS5 family.

Has a role in the biogenesis of eye pigment granules. Eye pigment granules are specialized forms of late endosomes or lysosomes. Biogenesis of pigment granules in the eye requires molecular components required for protein delivery to lysosomes. This Aedes aegypti (Yellowfever mosquito) protein is BLOC-2 complex member HPS5 homolog.